The following is a 485-amino-acid chain: Ribulose bisphosphate carboxylase large chain 2 (485 aa).

The substrate site is built by N124 and T174. The Proton acceptor role is filled by K176. K178 contributes to the substrate binding site. Positions 202, 204, and 205 each coordinate Mg(2+). K202 bears the N6-carboxylysine mark. Residue H294 is the Proton acceptor of the active site. Substrate-binding residues include R295, H327, and S379.

It belongs to the RuBisCO large chain family. Type I subfamily. Heterohexadecamer of 8 large chains and 8 small chains. Requires Mg(2+) as cofactor.

It catalyses the reaction 2 (2R)-3-phosphoglycerate + 2 H(+) = D-ribulose 1,5-bisphosphate + CO2 + H2O. It carries out the reaction D-ribulose 1,5-bisphosphate + O2 = 2-phosphoglycolate + (2R)-3-phosphoglycerate + 2 H(+). RuBisCO catalyzes two reactions: the carboxylation of D-ribulose 1,5-bisphosphate, the primary event in carbon dioxide fixation, as well as the oxidative fragmentation of the pentose substrate. Both reactions occur simultaneously and in competition at the same active site. This chain is Ribulose bisphosphate carboxylase large chain 2, found in Rhodopseudomonas palustris (strain BisB5).